The following is a 252-amino-acid chain: Trypsin iota (252 aa).

Residues Met1 to Ala19 form the signal peptide. The propeptide at Ser20 to Arg27 is activation peptide. The 223-residue stretch at Ile28–Asn250 folds into the Peptidase S1 domain. Cys53 and Cys69 are disulfide-bonded. Catalysis depends on charge relay system residues His68 and Asp113. 2 disulfides stabilise this stretch: Cys175/Cys193 and Cys202/Cys226. Catalysis depends on Ser206, which acts as the Charge relay system.

The protein belongs to the peptidase S1 family.

It is found in the secreted. The protein resides in the extracellular space. The catalysed reaction is Preferential cleavage: Arg-|-Xaa, Lys-|-Xaa.. The polypeptide is Trypsin iota (iotaTry) (Drosophila melanogaster (Fruit fly)).